Consider the following 333-residue polypeptide: Ribosomal RNA small subunit methyltransferase H (333 aa).

S-adenosyl-L-methionine contacts are provided by residues 31–33, D49, F76, D134, and Q141; that span reads GGY.

It belongs to the methyltransferase superfamily. RsmH family.

The protein resides in the cytoplasm. The catalysed reaction is cytidine(1402) in 16S rRNA + S-adenosyl-L-methionine = N(4)-methylcytidine(1402) in 16S rRNA + S-adenosyl-L-homocysteine + H(+). Specifically methylates the N4 position of cytidine in position 1402 (C1402) of 16S rRNA. This is Ribosomal RNA small subunit methyltransferase H from Wolbachia sp. subsp. Brugia malayi (strain TRS).